The chain runs to 343 residues: Melanoma-associated antigen B18 (343 aa).

Positions 1-17 (MPRGQKSKLRAREKRHQ) are enriched in basic residues. Residues 1 to 102 (MPRGQKSKLR…LGSSREAEGW (102 aa)) are disordered. A compositionally biased stretch (polar residues) spans 67–87 (APSTTNAIAPVSCSSNEGASS). A compositionally biased stretch (basic and acidic residues) spans 88–102 (QDEKSLGSSREAEGW). The tract at residues 100-343 (EGWKEDPLNK…TTSSSFSHAK (244 aa)) is interaction with LNX1. The region spanning 107-306 (LNKKVVSLVH…SAFPSCYEEA (200 aa)) is the MAGE domain. The interval 313–343 (RTQARAAARAHTAAMANARSRTTSSSFSHAK) is disordered. Low complexity predominate over residues 316–333 (ARAAARAHTAAMANARSR). Positions 334 to 343 (TTSSSFSHAK) are enriched in polar residues.

As to quaternary structure, interacts with LNX1.

Its subcellular location is the cytoplasm. May enhance ubiquitin ligase activity of RING-type zinc finger-containing E3 ubiquitin-protein ligases. Proposed to act through recruitment and/or stabilization of the Ubl-conjugating enzyme (E2) at the E3:substrate complex. This chain is Melanoma-associated antigen B18 (MAGEB18), found in Homo sapiens (Human).